The primary structure comprises 497 residues: Aspartyl/glutamyl-tRNA(Asn/Gln) amidotransferase subunit B (497 aa).

This sequence belongs to the GatB/GatE family. GatB subfamily. Heterotrimer of A, B and C subunits.

The enzyme catalyses L-glutamyl-tRNA(Gln) + L-glutamine + ATP + H2O = L-glutaminyl-tRNA(Gln) + L-glutamate + ADP + phosphate + H(+). It catalyses the reaction L-aspartyl-tRNA(Asn) + L-glutamine + ATP + H2O = L-asparaginyl-tRNA(Asn) + L-glutamate + ADP + phosphate + 2 H(+). Its function is as follows. Allows the formation of correctly charged Asn-tRNA(Asn) or Gln-tRNA(Gln) through the transamidation of misacylated Asp-tRNA(Asn) or Glu-tRNA(Gln) in organisms which lack either or both of asparaginyl-tRNA or glutaminyl-tRNA synthetases. The reaction takes place in the presence of glutamine and ATP through an activated phospho-Asp-tRNA(Asn) or phospho-Glu-tRNA(Gln). In Novosphingobium aromaticivorans (strain ATCC 700278 / DSM 12444 / CCUG 56034 / CIP 105152 / NBRC 16084 / F199), this protein is Aspartyl/glutamyl-tRNA(Asn/Gln) amidotransferase subunit B.